The following is a 349-amino-acid chain: Isopentenyl-diphosphate delta-isomerase (349 aa).

A substrate-binding site is contributed by 6–7 (RK). FMN-binding positions include 62–64 (AMT), Ser-93, and Asn-122. Gln-152 is a substrate binding site. Position 153 (Glu-153) interacts with Mg(2+). FMN-binding positions include Lys-184, Thr-214, 258–259 (GG), and 280–281 (AG).

Belongs to the IPP isomerase type 2 family. In terms of assembly, homooctamer. Dimer of tetramers. Requires FMN as cofactor. NADPH is required as a cofactor. The cofactor is Mg(2+).

Its subcellular location is the cytoplasm. The enzyme catalyses isopentenyl diphosphate = dimethylallyl diphosphate. Involved in the biosynthesis of isoprenoids. Catalyzes the 1,3-allylic rearrangement of the homoallylic substrate isopentenyl (IPP) to its allylic isomer, dimethylallyl diphosphate (DMAPP). The chain is Isopentenyl-diphosphate delta-isomerase from Bacillus mycoides (strain KBAB4) (Bacillus weihenstephanensis).